The sequence spans 589 residues: Intermediate filament protein ifb-1 (589 aa).

Positions methionine 1–glycine 42 are disordered. The tract at residues serine 8–threonine 84 is head. The span at tyrosine 14 to glutamine 30 shows a compositional bias: polar residues. One can recognise an IF rod domain in the interval glutamate 81 to valine 433. Residues leucine 85–leucine 116 form a coil 1A region. Residues arginine 117 to lysine 130 form a linker 1 region. Positions tyrosine 131 to leucine 268 are coil 1B. The linker 12 stretch occupies residues glutamine 269 to asparagine 285. A coil 2 region spans residues glutamate 286–valine 433. Residues glycine 434 to glycine 588 are tail. The interval lysine 444 to phenylalanine 470 is disordered. The 119-residue stretch at threonine 466–threonine 584 folds into the LTD domain.

It belongs to the intermediate filament family. As to quaternary structure, forms some heteromeric filaments with ifa-1, ifa-2, ifa-3 and probably ifa-4. As to expression, expressed in epidermal cells. Expressed in amphid sensory neurons, the excretory cells, the vulva, the uterus, the rectum and some neurons of the tail. Isoform a and isoform b display a similar pattern of expression. Isoform a is predominant in pharyngeal tonofilaments.

The protein resides in the cytoplasm. Its function is as follows. Cytoplasmic intermediate filaments provide mechanical strength to cells. Essential protein, involved in attachment structures in epidermal cells that connect muscles to the external cuticle. Required in morphogenesis and epidermal integrity. Probable component of embryonic epidermal attachment structures. Functions in larval muscle attachment independently of ifa-2. The chain is Intermediate filament protein ifb-1 (ifb-1) from Caenorhabditis elegans.